We begin with the raw amino-acid sequence, 508 residues long: Anthranilate synthase component 1 (508 aa).

Residues Ser-49 and 282-284 (PYM) contribute to the L-tryptophan site. Position 317–318 (317–318 (GT)) interacts with chorismate. Position 344 (Glu-344) interacts with Mg(2+). Chorismate is bound by residues Tyr-432, Arg-452, 466 to 468 (GAG), and Gly-468. Glu-481 is a Mg(2+) binding site.

Belongs to the anthranilate synthase component I family. Heterotetramer consisting of two non-identical subunits: a beta subunit (TrpG) and a large alpha subunit (TrpE). It depends on Mg(2+) as a cofactor.

The enzyme catalyses chorismate + L-glutamine = anthranilate + pyruvate + L-glutamate + H(+). It functions in the pathway amino-acid biosynthesis; L-tryptophan biosynthesis; L-tryptophan from chorismate: step 1/5. Feedback inhibited by tryptophan. Its function is as follows. Part of a heterotetrameric complex that catalyzes the two-step biosynthesis of anthranilate, an intermediate in the biosynthesis of L-tryptophan. In the first step, the glutamine-binding beta subunit (TrpG) of anthranilate synthase (AS) provides the glutamine amidotransferase activity which generates ammonia as a substrate that, along with chorismate, is used in the second step, catalyzed by the large alpha subunit of AS (TrpE) to produce anthranilate. In the absence of TrpG, TrpE can synthesize anthranilate directly from chorismate and high concentrations of ammonia. The chain is Anthranilate synthase component 1 (trpE) from Bacillus caldotenax.